The primary structure comprises 91 residues: ATP synthase subunit c (91 aa).

The next 2 helical transmembrane spans lie at 4-24 and 53-73; these read FTMC…GTGI and IGLA…LIIL.

This sequence belongs to the ATPase C chain family. In terms of assembly, F-type ATPases have 2 components, F(1) - the catalytic core - and F(0) - the membrane proton channel. F(1) has five subunits: alpha(3), beta(3), gamma(1), delta(1), epsilon(1). F(0) has three main subunits: a(1), b(2) and c(10-14). The alpha and beta chains form an alternating ring which encloses part of the gamma chain. F(1) is attached to F(0) by a central stalk formed by the gamma and epsilon chains, while a peripheral stalk is formed by the delta and b chains.

It is found in the cell inner membrane. In terms of biological role, f(1)F(0) ATP synthase produces ATP from ADP in the presence of a proton or sodium gradient. F-type ATPases consist of two structural domains, F(1) containing the extramembraneous catalytic core and F(0) containing the membrane proton channel, linked together by a central stalk and a peripheral stalk. During catalysis, ATP synthesis in the catalytic domain of F(1) is coupled via a rotary mechanism of the central stalk subunits to proton translocation. Key component of the F(0) channel; it plays a direct role in translocation across the membrane. A homomeric c-ring of between 10-14 subunits forms the central stalk rotor element with the F(1) delta and epsilon subunits. This chain is ATP synthase subunit c, found in Geobacter sulfurreducens (strain ATCC 51573 / DSM 12127 / PCA).